A 951-amino-acid chain; its full sequence is Bifunctional glutamine synthetase adenylyltransferase/adenylyl-removing enzyme (951 aa).

Positions 1-440 (MLPLPSELQI…VFDDLIGDET (440 aa)) are adenylyl removase. Residues 449–951 (HGLYKSLWQD…WLAANDANVS (503 aa)) form an adenylyl transferase region.

This sequence belongs to the GlnE family. Requires Mg(2+) as cofactor.

It carries out the reaction [glutamine synthetase]-O(4)-(5'-adenylyl)-L-tyrosine + phosphate = [glutamine synthetase]-L-tyrosine + ADP. The enzyme catalyses [glutamine synthetase]-L-tyrosine + ATP = [glutamine synthetase]-O(4)-(5'-adenylyl)-L-tyrosine + diphosphate. Functionally, involved in the regulation of glutamine synthetase GlnA, a key enzyme in the process to assimilate ammonia. When cellular nitrogen levels are high, the C-terminal adenylyl transferase (AT) inactivates GlnA by covalent transfer of an adenylyl group from ATP to specific tyrosine residue of GlnA, thus reducing its activity. Conversely, when nitrogen levels are low, the N-terminal adenylyl removase (AR) activates GlnA by removing the adenylyl group by phosphorolysis, increasing its activity. The regulatory region of GlnE binds the signal transduction protein PII (GlnB) which indicates the nitrogen status of the cell. In Yersinia pestis bv. Antiqua (strain Antiqua), this protein is Bifunctional glutamine synthetase adenylyltransferase/adenylyl-removing enzyme.